A 511-amino-acid chain; its full sequence is Probable lipid II flippase MurJ (511 aa).

The next 13 membrane-spanning stretches (helical) occupy residues 31–51, 90–110, 130–150, 159–179, 182–202, 237–257, 271–291, 314–334, 354–374, 383–403, 407–427, 443–463, and 481–501; these read IFGA…PNLL, LLTL…PWVI, LLKI…VGAI, IPAF…LFAA, FNPP…LQLV, ILGV…ASFL, LMEF…LPSL, CFLL…PLTV, LIAY…APGF, PVKI…AFIG, HAGL…LLYW, AFLL…LGML, and LMAV…VLGF.

It belongs to the MurJ/MviN family.

The protein resides in the cell inner membrane. The protein operates within cell wall biogenesis; peptidoglycan biosynthesis. Functionally, involved in peptidoglycan biosynthesis. Transports lipid-linked peptidoglycan precursors from the inner to the outer leaflet of the cytoplasmic membrane. The protein is Probable lipid II flippase MurJ of Escherichia coli O157:H7.